A 455-amino-acid chain; its full sequence is Protein indeterminate-domain 7 (455 aa).

Positions 1–52 (MMMNRDILFHQQQQQQMEENMSNLTSASGDQASVSSGNRTETSGSNINQHHQ) are disordered. The span at 17 to 49 (MEENMSNLTSASGDQASVSSGNRTETSGSNINQ) shows a compositional bias: polar residues. S82 is subject to Phosphoserine. 2 consecutive C2H2-type zinc fingers follow at residues 92–114 (FICEVCNKGFQRDQNLQLHKRGH) and 134–164 (YVCPEPGCVHHHPSRALGDLTGIKKHFFRKH). Residues 156–163 (IKKHFFRK) carry the Nuclear localization signal motif. The C2H2-type 2; degenerate zinc-finger motif lies at 169 to 192 (WKCEKCSKKYAVQSDWKAHAKTCG). Zn(2+) contacts are provided by C171, C174, H187, C191, C198, C200, H213, and C217. The segment at 196-219 (YKCDCGTLFSRRDSFITHRAFCDA) adopts a CCHC-type 2; atypical zinc-finger fold. The tract at residues 206-218 (RRDSFITHRAFCD) is SHR-binding. Residues 235–351 (QASNSPHHHH…PEEEERSSRS (117 aa)) are disordered. Low complexity-rich tracts occupy residues 248–265 (QQNIGFSSSSQNIISNSN) and 288–299 (SSNPNPNGNNGN).

Its subcellular location is the nucleus. Its function is as follows. Probable transcription factor. This is Protein indeterminate-domain 7 from Arabidopsis thaliana (Mouse-ear cress).